A 231-amino-acid polypeptide reads, in one-letter code: 4-aminobenzoate synthase (231 aa).

6 residues coordinate Fe(2+): E81, H88, E142, H174, D178, and H181.

It belongs to the CADD family. Homodimer. During infection, interacts with death domains of mammalian tumor necrosis factor (TNF) family receptors Fas, DR4, DR5 and to some extent TNFR1, but not with the respective downstream adapters. The cofactor is Fe(2+). Mn(2+) serves as cofactor.

The protein resides in the secreted. It localises to the host cytoplasm. Its activity is regulated as follows. The protein is a cosubstrate rather than a true enzyme and is left in an inactive state after a single turnover. Inactive under anaerobic conditions. Its function is as follows. Involved in de novo para-aminobenzoate (PABA) biosynthesis. Acts as a self-sacrificing or 'suicide' enzyme that utilizes its own active site tyrosine residue(s) as the substrate for PABA synthesis. The side chain of the tyrosine residue is released from the protein backbone via cleavage of the C(alpha)-C(beta) bond, leaving a glycine in place of the original tyrosine residue. Reaction requires O(2) and a reduced dimetal cofactor. Was also identified as a specific toxin that associates with death domains of tumor necrosis factor family (TNF) receptors and induces apoptosis in mammalian cell lines through a Caspase-dependent mechanism. In Chlamydia trachomatis serovar D (strain ATCC VR-885 / DSM 19411 / UW-3/Cx), this protein is 4-aminobenzoate synthase.